A 137-amino-acid polypeptide reads, in one-letter code: MRPQQAPVSGKVFIQRDYSSGTRCQFQTKFPAELENRVDRQQFEETVRTLNNLYAEAEKLGGQSYLEGCLACLTAYTIFLCMETHYEKVLKKVSKYIQEQNEKIYAPQGLLLTDPIERGLRVIEITIYEDRGVSSGR.

S-palmitoyl cysteine attachment occurs at residues Cys69 and Cys72.

It belongs to the ERF4 family. In terms of assembly, interacts with GOLGA3. Interacts with ZDHHC9. Palmitoylated on Cys-69 and Cys-72; which is required for Golgi localization and interaction with GOLGA3.

The protein resides in the golgi apparatus membrane. Functionally, may be involved in protein transport from Golgi to cell surface. The ZDHHC9-GOLGA7 complex is a palmitoyltransferase specific for HRAS and NRAS. In Rattus norvegicus (Rat), this protein is Golgin subfamily A member 7 (Golga7).